The chain runs to 427 residues: MEATAASTSLPDPGDFDRNVPRICGVCGDRATGFHFNAMTCEGCKGFFRRSMKRKALFTCPFNGDCRITKDNRRHCQACRLKRCVDIGMMKEFILTDEEVQRKREMILKRKEEEALKDSLRPKLSEEQQRIIAILLDAHHKTYDPTYADFGQFRPPVRGDEEEGTLPSRSSSAHAPSFSGSSSSSCSDQYTSSPDTMEPASFSHLDLSEEDSDDPSVTLDLSQLSMLPHLADLVSYSIQKVIGFAKMIPGFRDLTAEDQIVLLKSSAIEVIMLRSNQSFTMDDMSWTCGSRDYKYQVSDVAKAGHSLELIEPLIKFQVGLKKLNLHEEEHVLLMAICIVSPDRPGVQDPTLIEAIQDRLSNTLQTYIRCRHPPPGSHLLYAKMIQKLADLRSLNEEHSKQYRCLSFQPECSMKLTPLVLEVFGNEIS.

A DNA-binding region (nuclear receptor) is located at residues 21-96 (PRICGVCGDR…IGMMKEFILT (76 aa)). The Zn(2+) site is built by Cys-24, Cys-27, Cys-41, Cys-44, Cys-60, Cys-66, Cys-76, and Cys-79. 2 consecutive NR C4-type zinc fingers follow at residues 24–44 (CGVCGDRATGFHFNAMTCEGC) and 60–79 (CPFNGDCRITKDNRRHCQAC). A hinge region spans residues 97 to 126 (DEEVQRKREMILKRKEEEALKDSLRPKLSE). Positions 127-423 (EQQRIIAILL…LTPLVLEVFG (297 aa)) constitute an NR LBD domain. Tyr-143 serves as a coordination point for calcitriol. A disordered region spans residues 149–201 (DFGQFRPPVRGDEEEGTLPSRSSSAHAPSFSGSSSSSCSDQYTSSPDTMEPAS). Residues 168 to 193 (SRSSSAHAPSFSGSSSSSCSDQYTSS) show a composition bias toward low complexity. Ser-237 lines the calcitriol pocket. The interval 246–264 (KMIPGFRDLTAEDQIVLLK) is interaction with coactivator LXXLL motif. Positions 274, 278, 305, and 397 each coordinate calcitriol. Positions 416-424 (PLVLEVFGN) match the 9aaTAD motif.

Belongs to the nuclear hormone receptor family. NR1 subfamily. In terms of assembly, homodimer in the absence of bound vitamin D3. Heterodimer with RXRA after vitamin D3 binding. Interacts with MED1, NCOA1, NCOA2, NCOA3 and NCOA6 coactivators, leading to a strong increase of transcription of target genes. Interacts with the corepressor NCOR1. Interacts with SNW1. Interacts with IRX4, the interaction does not affect its transactivation activity. Interacts with CRY1. Interacts with CRY2 in a ligand-dependent manner. In terms of processing, ubiquitinated by UBR5, leading to its degradation: UBR5 specifically recognizes and binds ligand-bound VDR when it is not associated with coactivators (NCOAs). In presence of NCOAs, the UBR5-degron is not accessible, preventing its ubiquitination and degradation.

It is found in the nucleus. It localises to the cytoplasm. Nuclear receptor for calcitriol, the active form of vitamin D3 which mediates the action of this vitamin on cells. Enters the nucleus upon vitamin D3 binding where it forms heterodimers with the retinoid X receptor/RXR. The VDR-RXR heterodimers bind to specific response elements on DNA and activate the transcription of vitamin D3-responsive target genes. Plays a central role in calcium homeostasis. Also functions as a receptor for the secondary bile acid lithocholic acid (LCA) and its metabolites. This Sus scrofa (Pig) protein is Vitamin D3 receptor (VDR).